Here is a 294-residue protein sequence, read N- to C-terminus: Acetyl-coenzyme A carboxylase carboxyl transferase subunit beta (294 aa).

Residues 30 to 294 (IMTKCPECKK…PEVGGEADGE (265 aa)) enclose the CoA carboxyltransferase N-terminal domain. Residues Cys34, Cys37, Cys53, and Cys56 each contribute to the Zn(2+) site. The C4-type zinc finger occupies 34–56 (CPECKKIMYTKELQKNLMVCNYC).

It belongs to the AccD/PCCB family. In terms of assembly, acetyl-CoA carboxylase is a heterohexamer composed of biotin carboxyl carrier protein (AccB), biotin carboxylase (AccC) and two subunits each of ACCase subunit alpha (AccA) and ACCase subunit beta (AccD). It depends on Zn(2+) as a cofactor.

It is found in the cytoplasm. The enzyme catalyses N(6)-carboxybiotinyl-L-lysyl-[protein] + acetyl-CoA = N(6)-biotinyl-L-lysyl-[protein] + malonyl-CoA. It participates in lipid metabolism; malonyl-CoA biosynthesis; malonyl-CoA from acetyl-CoA: step 1/1. Component of the acetyl coenzyme A carboxylase (ACC) complex. Biotin carboxylase (BC) catalyzes the carboxylation of biotin on its carrier protein (BCCP) and then the CO(2) group is transferred by the transcarboxylase to acetyl-CoA to form malonyl-CoA. In Listeria monocytogenes serotype 4b (strain F2365), this protein is Acetyl-coenzyme A carboxylase carboxyl transferase subunit beta.